Consider the following 414-residue polypeptide: Esterase FrsA (414 aa).

The protein belongs to the FrsA family.

It carries out the reaction a carboxylic ester + H2O = an alcohol + a carboxylate + H(+). Catalyzes the hydrolysis of esters. The polypeptide is Esterase FrsA (Escherichia coli O7:K1 (strain IAI39 / ExPEC)).